We begin with the raw amino-acid sequence, 332 residues long: Twinfilin-1 (332 aa).

Positions 5–132 constitute an ADF-H 1 domain; it reads SGIVAEQALL…VDLKNFDSAR (128 aa). Residues Ser167 and Ser172 each carry the phosphoserine modification. One can recognise an ADF-H 2 domain in the interval 173-300; sequence PLSLTFRVNS…DKSLLMATNK (128 aa). The disordered stretch occupies residues 301 to 332; the sequence is EDSLDHGSNPDLPNKSNLKFNKPKGPLRKRRT. Over residues 321-332 the composition is skewed to basic residues; sequence NKPKGPLRKRRT.

The protein belongs to the actin-binding proteins ADF family. Twinfilin subfamily. As to quaternary structure, interacts with G-actin; ADP-actin form.

Its subcellular location is the cytoplasm. It is found in the cytoskeleton. In terms of biological role, actin-binding protein involved in motile and morphological processes. Inhibits actin polymerization, likely by sequestering G-actin. Prevents actin filament assembly by forming a 1:1 complex with actin monomers, and inhibits the nucleotide exchange reaction of actin monomers. This chain is Twinfilin-1 (TWF1), found in Saccharomyces cerevisiae (strain ATCC 204508 / S288c) (Baker's yeast).